The sequence spans 149 residues: Large ribosomal subunit protein bL20m (149 aa).

The transit peptide at 1–9 (MVFLTTRLW) directs the protein to the mitochondrion.

The protein belongs to the bacterial ribosomal protein bL20 family. In terms of assembly, component of the mitochondrial ribosome large subunit (39S) which comprises a 16S rRNA and about 50 distinct proteins. Interacts with OXA1L.

It is found in the mitochondrion. This is Large ribosomal subunit protein bL20m (Mrpl20) from Mus musculus (Mouse).